Consider the following 222-residue polypeptide: Pyrrolidone-carboxylate peptidase (222 aa).

Residues glutamate 80, cysteine 146, and histidine 170 contribute to the active site.

The protein belongs to the peptidase C15 family. As to quaternary structure, homotetramer.

It is found in the cytoplasm. It carries out the reaction Release of an N-terminal pyroglutamyl group from a polypeptide, the second amino acid generally not being Pro.. Functionally, removes 5-oxoproline from various penultimate amino acid residues except L-proline. The sequence is that of Pyrrolidone-carboxylate peptidase from Mycobacterium tuberculosis (strain ATCC 25177 / H37Ra).